The chain runs to 207 residues: uncharacterized protein (207 aa).

The 188-residue stretch at 14–201 (ARLINQAVEI…SPVILREGSG (188 aa)) folds into the YrdC-like domain.

The protein belongs to the SUA5 family.

This is an uncharacterized protein from Haemophilus influenzae (strain ATCC 51907 / DSM 11121 / KW20 / Rd).